Here is a 111-residue protein sequence, read N- to C-terminus: WAP four-disulfide core domain protein 12 (111 aa).

A signal peptide spans 1–23 (MGSSSFLVLTVSLALVTLVAAEG). One can recognise a WAP domain in the interval 27–74 (GIEKAGVCPADNVRCFKSDPPQCHTDQDCLGARKCCYLHCGFKCVIPV). 4 disulfide bridges follow: cysteine 34–cysteine 62, cysteine 41–cysteine 66, cysteine 49–cysteine 61, and cysteine 55–cysteine 70. The tract at residues 80 to 111 (GGNKDEDVSGPCPEPGWEAKSPGSSSTGCPQK) is disordered. Residues 101–111 (PGSSSTGCPQK) are compositionally biased toward polar residues.

It is found in the secreted. Its function is as follows. Antibacterial protein. Putative acid-stable proteinase inhibitor. This Papio anubis (Olive baboon) protein is WAP four-disulfide core domain protein 12 (WFDC12).